Here is a 394-residue protein sequence, read N- to C-terminus: Zinc finger and SCAN domain-containing protein 9 (394 aa).

A Glycyl lysine isopeptide (Lys-Gly) (interchain with G-Cter in SUMO2) cross-link involves residue lysine 26. The SCAN box domain occupies 52-134 (RRHFRQLCYQ…ILLEDLEREL (83 aa)). Glycyl lysine isopeptide (Lys-Gly) (interchain with G-Cter in SUMO2) cross-links involve residues lysine 215 and lysine 238. 5 C2H2-type zinc fingers span residues 254–276 (HKCD…QRIH), 282–304 (YECN…RGIH), 310–332 (YHCK…QRIH), 338–360 (YQCS…QRSH), and 366–388 (HQCI…QKIH).

This sequence belongs to the krueppel C2H2-type zinc-finger protein family.

The protein localises to the nucleus. In terms of biological role, may be involved in transcriptional regulation. This chain is Zinc finger and SCAN domain-containing protein 9 (ZSCAN9), found in Homo sapiens (Human).